Here is a 237-residue protein sequence, read N- to C-terminus: MRPSRRAPDELRAVSLERGVVKYAEGSCLVKFGDTHVLVTATLEERLPPWLKGQGRGWVTAEYGMLPRATLERTRREAAAGKQNGRTVEIQRLIGRSLRTIVDLQALGERQITVDCDVLQADGGTRTASITGAWVALADCLAWMKTRNMLKGQVMRDNVAAISCGIYNGTPVLDLDYAEDSEAETDANFVMTGDGRIVEVQGTAEKTPFSQDEFLALMALAQKGVARLVDLQKMAVA.

Residues arginine 86 and 124 to 126 (GTR) each bind phosphate.

The protein belongs to the RNase PH family. As to quaternary structure, homohexameric ring arranged as a trimer of dimers.

The enzyme catalyses tRNA(n+1) + phosphate = tRNA(n) + a ribonucleoside 5'-diphosphate. Its function is as follows. Phosphorolytic 3'-5' exoribonuclease that plays an important role in tRNA 3'-end maturation. Removes nucleotide residues following the 3'-CCA terminus of tRNAs; can also add nucleotides to the ends of RNA molecules by using nucleoside diphosphates as substrates, but this may not be physiologically important. Probably plays a role in initiation of 16S rRNA degradation (leading to ribosome degradation) during starvation. This Rhodopseudomonas palustris (strain HaA2) protein is Ribonuclease PH.